Here is a 767-residue protein sequence, read N- to C-terminus: Protein transport protein Sec23A (767 aa).

Positions 61, 66, 85, and 88 each coordinate Zn(2+). One copy of the Gelsolin-like repeat lies at 634 to 720 (PEPVLLDSSS…EHGGSQARFL (87 aa)).

It belongs to the SEC23/SEC24 family. SEC23 subfamily. As to quaternary structure, COPII is composed of at least five proteins: the Sec23/24 complex, the Sec13/31 complex and Sar1.

It localises to the cytoplasmic vesicle. Its subcellular location is the COPII-coated vesicle membrane. The protein localises to the endoplasmic reticulum membrane. The protein resides in the cytoplasm. It is found in the cytosol. Its function is as follows. Component of the coat protein complex II (COPII) which promotes the formation of transport vesicles from the endoplasmic reticulum (ER). The coat has two main functions, the physical deformation of the endoplasmic reticulum membrane into vesicles and the selection of cargo molecules for their transport to the Golgi complex. The polypeptide is Protein transport protein Sec23A (Gallus gallus (Chicken)).